The sequence spans 260 residues: MAEAGQPRALPTAFAPPPPLWKHFTPGNLKKLEEIKREASKGEDGKARRKDWTPAELRALDLSPELGFLVPPEIPTKGHYSVFGELQSLSTALPSLQEQGIEQLYPSPPTETDREAPSQPSRPFNHAYYLLKISKSLLLNFLEFVGVLSVAPEQFQAKVEDLRNLFINAHHLLNLYRPHQARESLIMMMEEQLKRSREEIEQMDKLHTEIKGFLDQLKAQGVDVDSAAESVSKATKKDDTSNKRAAEDSGLIWDILGEID.

The tract at residues 1–21 is disordered; the sequence is MAEAGQPRALPTAFAPPPPLW.

This sequence belongs to the Mediator complex subunit 7 family. Component of the Mediator complex.

The protein resides in the nucleus. Its function is as follows. Component of the Mediator complex, a coactivator involved in the regulated transcription of nearly all RNA polymerase II-dependent genes. Mediator functions as a bridge to convey information from gene-specific regulatory proteins to the basal RNA polymerase II transcription machinery. Mediator is recruited to promoters by direct interactions with regulatory proteins and serves as a scaffold for the assembly of a functional preinitiation complex with RNA polymerase II and the general transcription factors. This Aspergillus clavatus (strain ATCC 1007 / CBS 513.65 / DSM 816 / NCTC 3887 / NRRL 1 / QM 1276 / 107) protein is Mediator of RNA polymerase II transcription subunit 7 (med7).